Consider the following 1159-residue polypeptide: WASH complex subunit 5 (1159 aa).

It belongs to the strumpellin family. In terms of assembly, component of the WASH complex.

The protein resides in the early endosome. In terms of biological role, acts at least in part as component of the WASH complex which seems to regulate washc1 nucleation-promoting factor (NPF) activity and is required for its membrane targeting during endosomal sorting. The polypeptide is WASH complex subunit 5 (Xenopus tropicalis (Western clawed frog)).